We begin with the raw amino-acid sequence, 406 residues long: MPSTGSTPILAHDVKSPHRGSLALDGGKTGYRVTVHREDRYEIIIGRGTLARLGELLRPVMAANEADSAVIITDNHVGPLYAELVTKRISATGAPVQCIVIPAGEPSKSIAQAHRLWDELRSRSVRRRTFLVALGGGVLCDLVGFVATTYLRGIPYVNVATSLMGQVDGAIGGKVGVDHSTGKNLIGGFYHPDLVVIDPSCLATLPLAEVINGLAEAVKVALIGTPGLFEQLERLPMSTAWPLDQAAPERLIEGLGPIIPAAIGKKLELLAPDPFEQDLRRLLNLGHSVGHGLEAATHFVRYRHGEAVAIGTATVTAISTGLGLTSVDTLRRILRLLQKLRLPVTVPDDLREVVWQHLETARLVRNGRLLLVMPTAIDHSVIIDDITRGQYDAACQLVAQEAPACG.

Positions 1–21 (MPSTGSTPILAHDVKSPHRGS) are disordered. Residues 105-108 (EPSK), 137-141 (GVLCD), 161-162 (TS), Lys174, Lys183, and 201-204 (CLAT) contribute to the NAD(+) site. Glu216, His287, and His304 together coordinate Zn(2+).

Belongs to the sugar phosphate cyclases superfamily. EVS family. It depends on NAD(+) as a cofactor. The cofactor is Co(2+). Requires Zn(2+) as cofactor.

The catalysed reaction is D-sedoheptulose 7-phosphate = 2-epi-valiolone + phosphate. Its function is as follows. Catalyzes the conversion of sedoheptulose 7-phosphate to 2-epi-valiolone, which may serve as an alternative precursor for aminocyclitol biosynthesis. The sequence is that of 2-epi-valiolone synthase from Stigmatella aurantiaca (strain DW4/3-1).